Consider the following 134-residue polypeptide: Profilin-2 (134 aa).

Cysteines 13 and 118 form a disulfide. The Involved in PIP2 interaction signature appears at 84–100 (AVIRGKKGSGGITIKKT). Thr114 carries the phosphothreonine modification.

This sequence belongs to the profilin family. In terms of assembly, occurs in many kinds of cells as a complex with monomeric actin in a 1:1 ratio. Phosphorylated by MAP kinases.

It localises to the cytoplasm. The protein localises to the cytoskeleton. Binds to actin and affects the structure of the cytoskeleton. At high concentrations, profilin prevents the polymerization of actin, whereas it enhances it at low concentrations. The protein is Profilin-2 of Olea europaea (Common olive).